Here is a 357-residue protein sequence, read N- to C-terminus: NADH-quinone oxidoreductase subunit H (357 aa).

8 helical membrane passes run 20 to 40 (WLLV…MGCV), 92 to 112 (ALFV…WAVI), 127 to 147 (LLFV…AGWA), 165 to 185 (ISYE…SGSL), 203 to 223 (GLTF…IYII), 259 to 279 (FFLA…LMFL), 294 to 314 (IPGW…FIWF), and 329 to 349 (LGWK…AIWM).

The protein belongs to the complex I subunit 1 family. NDH-1 is composed of 14 different subunits. Subunits NuoA, H, J, K, L, M, N constitute the membrane sector of the complex.

Its subcellular location is the cell inner membrane. The enzyme catalyses a quinone + NADH + 5 H(+)(in) = a quinol + NAD(+) + 4 H(+)(out). NDH-1 shuttles electrons from NADH, via FMN and iron-sulfur (Fe-S) centers, to quinones in the respiratory chain. The immediate electron acceptor for the enzyme in this species is believed to be ubiquinone. Couples the redox reaction to proton translocation (for every two electrons transferred, four hydrogen ions are translocated across the cytoplasmic membrane), and thus conserves the redox energy in a proton gradient. This subunit may bind ubiquinone. The sequence is that of NADH-quinone oxidoreductase subunit H from Herminiimonas arsenicoxydans.